Reading from the N-terminus, the 232-residue chain is 5'-methylthioadenosine/S-adenosylhomocysteine nucleosidase (232 aa).

The active-site Proton acceptor is the E12. Residues G78, M153, and 174-175 (ME) each bind substrate. D198 (proton donor) is an active-site residue.

It belongs to the PNP/UDP phosphorylase family. MtnN subfamily.

The enzyme catalyses S-adenosyl-L-homocysteine + H2O = S-(5-deoxy-D-ribos-5-yl)-L-homocysteine + adenine. It carries out the reaction S-methyl-5'-thioadenosine + H2O = 5-(methylsulfanyl)-D-ribose + adenine. The catalysed reaction is 5'-deoxyadenosine + H2O = 5-deoxy-D-ribose + adenine. It functions in the pathway amino-acid biosynthesis; L-methionine biosynthesis via salvage pathway; S-methyl-5-thio-alpha-D-ribose 1-phosphate from S-methyl-5'-thioadenosine (hydrolase route): step 1/2. Its function is as follows. Catalyzes the irreversible cleavage of the glycosidic bond in both 5'-methylthioadenosine (MTA) and S-adenosylhomocysteine (SAH/AdoHcy) to adenine and the corresponding thioribose, 5'-methylthioribose and S-ribosylhomocysteine, respectively. Also cleaves 5'-deoxyadenosine, a toxic by-product of radical S-adenosylmethionine (SAM) enzymes, into 5-deoxyribose and adenine. This Anoxybacillus flavithermus (strain DSM 21510 / WK1) protein is 5'-methylthioadenosine/S-adenosylhomocysteine nucleosidase.